Consider the following 510-residue polypeptide: ATP synthase subunit alpha (510 aa).

169–176 (GDRQTGKT) provides a ligand contact to ATP.

Belongs to the ATPase alpha/beta chains family. As to quaternary structure, F-type ATPases have 2 components, CF(1) - the catalytic core - and CF(0) - the membrane proton channel. CF(1) has five subunits: alpha(3), beta(3), gamma(1), delta(1), epsilon(1). CF(0) has four main subunits: a(1), b(1), b'(1) and c(9-12).

The protein resides in the cell inner membrane. It catalyses the reaction ATP + H2O + 4 H(+)(in) = ADP + phosphate + 5 H(+)(out). Produces ATP from ADP in the presence of a proton gradient across the membrane. The alpha chain is a regulatory subunit. This chain is ATP synthase subunit alpha, found in Rhodopseudomonas palustris (strain BisA53).